The sequence spans 267 residues: Undecaprenyl-diphosphatase 2 (267 aa).

The next 8 helical transmembrane spans lie at 4-24 (IYFI…FLPI), 43-63 (EEKV…CWLF), 84-104 (FAVI…LFIH), 109-129 (VLFN…IILW), 147-167 (IGFK…IPGT), 186-206 (AATE…AIYD), 219-239 (ILAI…VVNA), and 243-263 (FVAK…GLII).

Belongs to the UppP family.

The protein localises to the cell inner membrane. It catalyses the reaction di-trans,octa-cis-undecaprenyl diphosphate + H2O = di-trans,octa-cis-undecaprenyl phosphate + phosphate + H(+). Its function is as follows. Catalyzes the dephosphorylation of undecaprenyl diphosphate (UPP). Confers resistance to bacitracin. The protein is Undecaprenyl-diphosphatase 2 of Shewanella oneidensis (strain ATCC 700550 / JCM 31522 / CIP 106686 / LMG 19005 / NCIMB 14063 / MR-1).